Here is a 270-residue protein sequence, read N- to C-terminus: 3-methyl-2-oxobutanoate hydroxymethyltransferase (270 aa).

Residues aspartate 50 and aspartate 89 each coordinate Mg(2+). 3-methyl-2-oxobutanoate is bound by residues 50–51 (DS), aspartate 89, and lysine 118. Residue glutamate 120 coordinates Mg(2+). Glutamate 187 (proton acceptor) is an active-site residue.

The protein belongs to the PanB family. In terms of assembly, homodecamer; pentamer of dimers. The cofactor is Mg(2+).

It is found in the cytoplasm. The enzyme catalyses 3-methyl-2-oxobutanoate + (6R)-5,10-methylene-5,6,7,8-tetrahydrofolate + H2O = 2-dehydropantoate + (6S)-5,6,7,8-tetrahydrofolate. It functions in the pathway cofactor biosynthesis; (R)-pantothenate biosynthesis; (R)-pantoate from 3-methyl-2-oxobutanoate: step 1/2. Catalyzes the reversible reaction in which hydroxymethyl group from 5,10-methylenetetrahydrofolate is transferred onto alpha-ketoisovalerate to form ketopantoate. This Helicobacter pylori (strain ATCC 700392 / 26695) (Campylobacter pylori) protein is 3-methyl-2-oxobutanoate hydroxymethyltransferase.